Consider the following 367-residue polypeptide: Heme A synthase (367 aa).

A run of 5 helical transmembrane segments spans residues 12–32, 99–119, 127–147, 163–183, and 198–218; these read GAVRTWLYVVAALVVAMVAVG, LLGRVIGLVFFLPLILFWWQG, LGLLGLGLLGGLQGAIGWIMV, LALHLTTASLILAGLVWLAAG, and ATALLLPILVLVQIFLGGLVA. A heme-binding site is contributed by H264. 3 helical membrane passes run 266–286, 296–316, and 317–337; these read VTAYLVFVVAVLHAVDARLTG, GVVILVLAQMALGIATLLLAV, and PLWAALAHQVLAMAVLTMATV. Residue H324 coordinates heme.

This sequence belongs to the COX15/CtaA family. Type 2 subfamily. As to quaternary structure, interacts with CtaB. It depends on heme b as a cofactor.

The protein resides in the cell membrane. It catalyses the reaction Fe(II)-heme o + 2 A + H2O = Fe(II)-heme a + 2 AH2. The protein operates within porphyrin-containing compound metabolism; heme A biosynthesis; heme A from heme O: step 1/1. In terms of biological role, catalyzes the conversion of heme O to heme A by two successive hydroxylations of the methyl group at C8. The first hydroxylation forms heme I, the second hydroxylation results in an unstable dihydroxymethyl group, which spontaneously dehydrates, resulting in the formyl group of heme A. In Methylobacterium radiotolerans (strain ATCC 27329 / DSM 1819 / JCM 2831 / NBRC 15690 / NCIMB 10815 / 0-1), this protein is Heme A synthase.